Here is a 246-residue protein sequence, read N- to C-terminus: Transcription factor MYB13 (246 aa).

2 HTH myb-type domains span residues 9-61 (KIGL…INYL) and 62-116 (RPDI…KKRL). DNA-binding regions (H-T-H motif) lie at residues 37-61 (WRALPKLAGLLRCGKSCRLRWINYL) and 89-112 (WSAIAAKLPGRTDNEIKNVWHTHL).

In terms of tissue distribution, expressed in roots and flowers. Expressed in shoot apex, axillary buds, at the basis of flowers and branching points of inflorescences.

The protein localises to the nucleus. Functionally, plays a regulatory role in meristem function. Functions as component of a regulatory network controlling the establishment and/or development of the shoot system by the regulation of apical meristem function. May play a role in tolerance to boric acid. This chain is Transcription factor MYB13, found in Arabidopsis thaliana (Mouse-ear cress).